The primary structure comprises 561 residues: Dihydroxy-acid dehydratase (561 aa).

A [2Fe-2S] cluster-binding site is contributed by Cys51. Residue Asp83 coordinates Mg(2+). Cys124 is a [2Fe-2S] cluster binding site. Asp125 and Lys126 together coordinate Mg(2+). At Lys126 the chain carries N6-carboxylysine. Cys196 provides a ligand contact to [2Fe-2S] cluster. Glu447 lines the Mg(2+) pocket. Catalysis depends on Ser473, which acts as the Proton acceptor.

Belongs to the IlvD/Edd family. As to quaternary structure, homodimer. Requires [2Fe-2S] cluster as cofactor. Mg(2+) is required as a cofactor.

The catalysed reaction is (2R)-2,3-dihydroxy-3-methylbutanoate = 3-methyl-2-oxobutanoate + H2O. It carries out the reaction (2R,3R)-2,3-dihydroxy-3-methylpentanoate = (S)-3-methyl-2-oxopentanoate + H2O. Its pathway is amino-acid biosynthesis; L-isoleucine biosynthesis; L-isoleucine from 2-oxobutanoate: step 3/4. It functions in the pathway amino-acid biosynthesis; L-valine biosynthesis; L-valine from pyruvate: step 3/4. Its function is as follows. Functions in the biosynthesis of branched-chain amino acids. Catalyzes the dehydration of (2R,3R)-2,3-dihydroxy-3-methylpentanoate (2,3-dihydroxy-3-methylvalerate) into 2-oxo-3-methylpentanoate (2-oxo-3-methylvalerate) and of (2R)-2,3-dihydroxy-3-methylbutanoate (2,3-dihydroxyisovalerate) into 2-oxo-3-methylbutanoate (2-oxoisovalerate), the penultimate precursor to L-isoleucine and L-valine, respectively. The chain is Dihydroxy-acid dehydratase from Oceanobacillus iheyensis (strain DSM 14371 / CIP 107618 / JCM 11309 / KCTC 3954 / HTE831).